The primary structure comprises 380 residues: Succinyl-diaminopimelate desuccinylase (380 aa).

His-69 contributes to the Zn(2+) binding site. Asp-71 is an active-site residue. Asp-102 is a Zn(2+) binding site. Residue Glu-135 is the Proton acceptor of the active site. Glu-136, Glu-164, and His-353 together coordinate Zn(2+).

This sequence belongs to the peptidase M20A family. DapE subfamily. Homodimer. Requires Zn(2+) as cofactor. The cofactor is Co(2+).

It carries out the reaction N-succinyl-(2S,6S)-2,6-diaminopimelate + H2O = (2S,6S)-2,6-diaminopimelate + succinate. It participates in amino-acid biosynthesis; L-lysine biosynthesis via DAP pathway; LL-2,6-diaminopimelate from (S)-tetrahydrodipicolinate (succinylase route): step 3/3. Its function is as follows. Catalyzes the hydrolysis of N-succinyl-L,L-diaminopimelic acid (SDAP), forming succinate and LL-2,6-diaminopimelate (DAP), an intermediate involved in the bacterial biosynthesis of lysine and meso-diaminopimelic acid, an essential component of bacterial cell walls. The polypeptide is Succinyl-diaminopimelate desuccinylase (Cereibacter sphaeroides (strain ATCC 17023 / DSM 158 / JCM 6121 / CCUG 31486 / LMG 2827 / NBRC 12203 / NCIMB 8253 / ATH 2.4.1.) (Rhodobacter sphaeroides)).